Here is a 464-residue protein sequence, read N- to C-terminus: Fumarate hydratase class II (464 aa).

Substrate-binding positions include 96-98 (SGT), 127-130 (HPND), 137-139 (SSN), and Thr-185. The Proton donor/acceptor role is filled by His-186. Ser-316 is a catalytic residue. Residues Ser-317 and 322–324 (KVN) contribute to the substrate site.

It belongs to the class-II fumarase/aspartase family. Fumarase subfamily. As to quaternary structure, homotetramer.

Its subcellular location is the cytoplasm. The catalysed reaction is (S)-malate = fumarate + H2O. It functions in the pathway carbohydrate metabolism; tricarboxylic acid cycle; (S)-malate from fumarate: step 1/1. In terms of biological role, involved in the TCA cycle. Catalyzes the stereospecific interconversion of fumarate to L-malate. The chain is Fumarate hydratase class II from Pseudomonas syringae pv. tomato (strain ATCC BAA-871 / DC3000).